Here is a 71-residue protein sequence, read N- to C-terminus: uncharacterized protein (71 aa).

The protein resides in the mitochondrion matrix. It is found in the kinetoplast. This is an uncharacterized protein from Trypanosoma brucei brucei.